We begin with the raw amino-acid sequence, 208 residues long: mRNA 3'-end-processing protein YTH1 (208 aa).

5 consecutive C3H1-type zinc fingers follow at residues 28–59 (DPDR…HVLP), 61–88 (FQNK…HEYN), 89–117 (LRKM…HIDP), 118–145 (ASKI…HIKK), and 147–170 (FCQR…HPQF).

The protein belongs to the CPSF4/YTH1 family. Component of the cleavage and polyadenylation factor (CPF) complex, which is composed of at least PTI1, SYC1, SSU72, GLC7, MPE1, REF2, PFS2, PTA1, YSH1/BRR5, SWD2, CFT2/YDH1, YTH1, CFT1/YHH1, FIP1 and PAP1. Interacts with FIP1 and YSH1.

The protein resides in the nucleus. Functionally, RNA-binding component of the cleavage and polyadenylation factor (CPF) complex, which plays a key role in polyadenylation-dependent pre-mRNA 3'-end formation and cooperates with cleavage factors including the CFIA complex and NAB4/CFIB. This chain is mRNA 3'-end-processing protein YTH1 (YTH1), found in Saccharomyces cerevisiae (strain ATCC 204508 / S288c) (Baker's yeast).